Here is a 328-residue protein sequence, read N- to C-terminus: Lytic polysaccharide monooxygenase aasB (328 aa).

An N-terminal signal peptide occupies residues 1-18 (MKAFFAISASTLLATVHG). His19 is a Cu(2+) binding site. Cys40 and Cys43 are oxidised to a cystine. An N-linked (GlcNAc...) asparagine glycan is attached at Asn54. 6 cysteine pairs are disulfide-bonded: Cys66/Cys245, Cys102/Cys203, Cys118/Cys145, Cys153/Cys161, Cys167/Cys173, and Cys181/Cys192. His109 serves as a coordination point for Cu(2+). Position 242 (Tyr242) interacts with Cu(2+). N-linked (GlcNAc...) asparagine glycosylation occurs at Asn306.

Belongs to the polysaccharide monooxygenase AA13 family. Requires Cu(2+) as cofactor.

It localises to the secreted. The catalysed reaction is starch + reduced acceptor + O2 = D-glucono-1,5-lactone-terminated malto-oligosaccharides + short-chain malto-oligosaccharides + acceptor + H2O.. Its function is as follows. Lytic polysaccharide monooxygenase involved in breakdown of granular resistant starch. This chain is Lytic polysaccharide monooxygenase aasB, found in Emericella nidulans (strain FGSC A4 / ATCC 38163 / CBS 112.46 / NRRL 194 / M139) (Aspergillus nidulans).